The chain runs to 198 residues: Auxin-binding protein 1 (198 aa).

Residues 1–33 (MIVLSVGSASSSPIVVVFSVALLLFYFSETSLG) form the signal peptide. Residues Cys-36 and Cys-189 are joined by a disulfide bond. Positions 92, 94, and 98 each coordinate Zn(2+). Residue Asn-130 is glycosylated (N-linked (GlcNAc...) asparagine). His-141 serves as a coordination point for Zn(2+). The Prevents secretion from ER signature appears at 195 to 198 (KDEL).

Homodimer. May interact with the GPI-anchored plasma membrane protein SKU5 and its family members. Interacts with TMK1 (via extracellular domain). Glycosylated. In terms of processing, ubiquitinated by RMA2, leading to proteasomal degradation.

The protein localises to the endoplasmic reticulum lumen. The protein resides in the cell membrane. In terms of biological role, auxin receptor that controls cell elongation and cell division. Involved in embryonic morphogenesis. Acts on the cell cycle, endocycle, cell plate formation, and cell expansion and contributes to the control of auxin-related gene expression. Controls root meristem size and mediates auxin responsiveness. Involved in activation of ROP GTPases in response to auxin and regulation of clathrin-mediated endocytosis in roots. Acts as a positive factor in clathrin recruitment to the plasma membrane, thereby promoting endocytosis. Upon auxin binding, restricts the internalization of PIN proteins by inhibiting clathrin-mediated endocytosis. Promotes auxin-triggered phosphorylation status modulation of RAF-like kinases (e.g. RAF20 and RAF24). Involved in the regulation of polar auxin transport. Behaves as a negative regulator of the SCF(TIR1/AFB) signaling pathway, protecting AUX/IAA repressors from degradation. Regulates the expression of cell wall remodeling genes via an SCF(TIR1/AFB)-dependent pathway. Involved in the modulation of hemicellulose xyloglucan structure. Required for rapid auxin-mediated re-orientation of microtubules to regulate cell elongation in roots and dark-grown hypocotyls as well as asymmetric growth during gravitropic responses. Involved in the shade avoidance response. Forms with TMK1 a cell surface auxin perception complex that activates ROP signaling pathways. ABP1 sensing of auxin is important for the ABP1-TMK1 complex formation. Interacts functionally with phytochrome to regulate growth. This is Auxin-binding protein 1 from Arabidopsis thaliana (Mouse-ear cress).